A 142-amino-acid polypeptide reads, in one-letter code: Small ribosomal subunit protein uS8c (142 aa).

It belongs to the universal ribosomal protein uS8 family. In terms of assembly, part of the 30S ribosomal subunit.

Its subcellular location is the plastid. Its function is as follows. One of the primary rRNA binding proteins, it binds directly to 16S rRNA central domain where it helps coordinate assembly of the platform of the 30S subunit. This Euglena longa (Euglenophycean alga) protein is Small ribosomal subunit protein uS8c (rps8).